Here is a 589-residue protein sequence, read N- to C-terminus: Growth factor receptor-bound protein 10 (589 aa).

Disordered regions lie at residues 1–51 (MALA…EDDV) and 77–107 (LHNGQHARGPPPPGARPLRPQASPRHRVPRS). Phosphoserine is present on Ser99. At Ser145 the chain carries Phosphoserine; by MTOR, MAPK1 and MAPK3. A Ras-associating domain is found at 161 to 245 (AKQDVKVFSE…SKFLFRKNYA (85 aa)). The region spanning 285–394 (CPEIQGFLHV…WMTAFRLLKY (110 aa)) is the PH domain. A Phosphoserine; by MAPK1 and MAPK3; in vitro modification is found at Ser413. The residue at position 423 (Ser423) is a Phosphoserine; by MTOR and PKB/AKT1. Phosphoserine is present on Ser426. Residue Ser471 is modified to Phosphoserine; by MTOR, MAPK1 and MAPK3. An SH2 domain is found at 488 to 584 (WFHGRISREE…VLPCKLKHHC (97 aa)).

This sequence belongs to the GRB7/10/14 family. As to quaternary structure, interacts with ligand-activated tyrosine kinase receptors, including FGFR1, INSR, IGF1R, MET and PDGFRB in a phosphotyrosine-dependent manner through the SH2 domain. Poorly binds to the EGFR. Directly interacts with MAP3K14/NIK and is recruited to the EGFR-ERBB2 complex. Interacts with GIGYF1/PERQ1 and GIGYF2/TNRC15. When unphosphorylated, interacts with AKT1 and when phosphorylated with YWHAE/14-3-3 epsilon. Interacts with NEDD4. Interacts with LRP6, thus interfering with the binding of AXIN1 to LRP6. Binds relatively non-specifically to several phosphoinositides, including PI(5)P, PI(4,5)P2, PI(3,4)P2 and PI(3,4,5)P3, with modest affinities through the PH domain. Binds to activated NRAS. In terms of processing, phosphorylated on serine residues upon EGF, FGF and PDGF stimulation.

The protein localises to the cytoplasm. Its activity is regulated as follows. Phosphorylation by mTORC1 stabilizes and activates GRB10 constituting a feedback pathway by which mTORC1 inhibits INSR-dependent signaling. In terms of biological role, adapter protein which modulates coupling of a number of cell surface receptor kinases with specific signaling pathways. Binds to, and suppress signals from, activated receptors tyrosine kinases, including the insulin (INSR) and insulin-like growth factor (IGF1R) receptors. The inhibitory effect can be achieved by 2 mechanisms: interference with the signaling pathway and increased receptor degradation. Delays and reduces AKT1 phosphorylation in response to insulin stimulation. Blocks association between INSR and IRS1 and IRS2 and prevents insulin-stimulated IRS1 and IRS2 tyrosine phosphorylation. Recruits NEDD4 to IGF1R, leading to IGF1R ubiquitination, increased internalization and degradation by both the proteasomal and lysosomal pathways. A similar role in the mediation of ubiquitination also has been suggested with INSR. Negatively regulates Wnt signaling by interacting with LRP6 intracellular portion and interfering with the binding of AXIN1 to LRP6. Positive regulator of the KDR/VEGFR-2 signaling pathway. May inhibit NEDD4-mediated degradation of KDR/VEGFR-2. This Sus scrofa (Pig) protein is Growth factor receptor-bound protein 10 (Grb10).